The chain runs to 258 residues: Aquaglyceroporin (258 aa).

The Cytoplasmic portion of the chain corresponds to 1–16 (MKVTFGNEYIKNFLGE). Residues 17–37 (FIGTFVLMFLGEGTTANHFAV) traverse the membrane as a helical segment. Residues 38–45 (PIKNDWLR) lie on the Extracellular side of the membrane. The helical transmembrane segment at 46-66 (LCIGWGLGVFFGILISAKLSG) threads the bilayer. Positions 67 and 70 each coordinate glycerol. Residues 67–87 (AHLNLAVTVGLSTIKKFNYKQ) lie on the Cytoplasmic side of the membrane. A helical transmembrane segment spans residues 88-108 (IPLYFAGQLLGALSATASVYG). Residues 109-133 (LYYGFVSDQTIPKFSWETGKHANVH) are Extracellular-facing. Residues 134–154 (IASAFMHEFILTGILLLIILS) form a helical membrane-spanning segment. The Cytoplasmic portion of the chain corresponds to 155 to 171 (VTDENICGKFHVLKVSS). A helical transmembrane segment spans residues 172–192 (IVGLAIICIGISFGGNTGFAL). Glycine 189, phenylalanine 190, asparagine 193, and arginine 196 together coordinate glycerol. At 193-217 (NPSRDLGARILSAIAYGFEAFTRDK) the chain is on the extracellular side. Residues 218 to 238 (CYFWIPLIAPIIGSIIFCQIY) form a helical membrane-spanning segment. Residues 239–258 (DKIVAPLVVISEHDKGALEI) lie on the Cytoplasmic side of the membrane.

It belongs to the MIP/aquaporin (TC 1.A.8) family.

The protein resides in the cell membrane. It carries out the reaction H2O(in) = H2O(out). The catalysed reaction is glycerol(in) = glycerol(out). It catalyses the reaction urea(in) = urea(out). Its function is as follows. Mediates water and glycerol transport across the cell membrane. Permeable to urea. Required for efficient progression of parasites through the liver stages. The chain is Aquaglyceroporin from Plasmodium berghei (strain Anka).